A 1033-amino-acid polypeptide reads, in one-letter code: NACHT, LRR and PYD domains-containing protein 3 (1033 aa).

The region spanning M1–E91 is the Pyrin domain. At S3 the chain carries Phosphoserine. A disulfide bridge links C6 with C104. Position 11 is a phosphotyrosine (Y11). C126 carries the S-palmitoyl cysteine lipid modification. Residues K127–K130 are required for binding to phosphatidylinositol 4-phosphate (PtdIns4P). Phosphotyrosine; by BTK occurs at positions 132, 136, and 145. The FISNA domain maps to Y136–E206. Residue S157 is modified to Phosphoserine. Phosphotyrosine; by BTK is present on Y164. T165 serves as a coordination point for ATP. S194 carries the post-translational modification Phosphoserine; by MAPK8. A Phosphoserine modification is found at S197. The NACHT domain occupies H216 to L532. ATP is bound at residue G222 to I230. S261 carries the phosphoserine modification. The residue at position 291 (S291) is a Phosphoserine; by PKD/PRKD1. K320 is covalently cross-linked (Glycyl lysine isopeptide (Lys-Gly) (interchain with G-Cter in ubiquitin)). A Phosphoserine modification is found at S330. Residues L351–Q355 carry the KFERQ-like motif 1 motif. K426 is covalently cross-linked (Glycyl lysine isopeptide (Lys-Gly) (interchain with G-Cter in ubiquitin)). H518 is a binding site for ATP. A KFERQ-like motif 2 motif is present at residues Q601–E605. K687 is covalently cross-linked (Glycyl lysine isopeptide (Lys-Gly) (interchain with G-Cter in ubiquitin)). A phosphoserine mark is found at S725 and S732. LRR repeat units lie at residues S739–C759, N768–S789, K796–C816, N825–L846, and S853–C873. Positions Q795–E799 match the KFERQ-like motif 3 motif. The residue at position 803 (S803) is a Phosphoserine; by CSNK1A1. 3 S-palmitoyl cysteine lipidation sites follow: C834, C835, and C841. Phosphotyrosine is present on Y858. K875 is covalently cross-linked (Glycyl lysine isopeptide (Lys-Gly) (interchain with G-Cter in ubiquitin)). 4 LRR repeats span residues N882–S903, N910–C930, K939–T960, and S967–E988. C955 carries S-palmitoyl cysteine lipidation. K970 participates in a covalent cross-link: Glycyl lysine isopeptide (Lys-Gly) (interchain with G-Cter in ubiquitin). Residues E988 to Q992 carry the KFERQ-like motif 4 motif. S1032 is subject to Phosphoserine.

It belongs to the NLRP family. In terms of assembly, sensor component of NLRP3 inflammasomes; inflammasomes are supramolecular complexes that assemble in the cytosol in response to pathogens and other damage-associated signals and play critical roles in innate immunity and inflammation. The core of NLRP3 inflammasomes consists of a signal sensor component (NLRP3), an adapter (PYCARD/ASC), which recruits an effector pro-inflammatory caspase (CASP1 and, possibly, CASP4 and CASP5). Homodecamer; inactive NLRP3 forms homodecameric double-ring cages that hide pyrin domains within NACHT-LRR rings to avoid premature activation. Interacts (via pyrin domain) with PYCARD/ASC (via pyrin domain); interaction is direct. Interacts (via LRR repeat domain) with NEK7 (via N-terminus); the interaction is required for the formation of the complex NLRP3:PYCARD, oligomerization of PYCARD/ASC and activation of CASP1. Interacts (via LRR repeat domain) with NR4A1/Nur77 (via N-terminus); the interaction is direct, requires activation of NR4A1 by its ligands NBRE-containing dsDNA and lipopolysaccharide, and stimulates the association of NLRP3 with NEK7 for non-canonical NLRP3 inflammasome activation. Interacts with CARD8; leading to inhibit formation of the NLRP3 inflammasome. Interacts with MEFV; this interaction targets NLRP3 to degradation by autophagy, hence preventing excessive IL1B- and IL18-mediated inflammation. Interacts with EIF2AK2/PKR; this interaction requires EIF2AK2 activity, is accompanied by EIF2AK2 autophosphorylation and promotes inflammasome assembly in response to specific stimuli. Interacts with GBP5 (via DAPIN domain); this interaction promotes inflammasome assembly in response to microbial and soluble, but not crystalline, agents. Interacts with PML (isoform PML-1) (via the leucine-rich repeat (LRR) domain); PML-mediated increase in NLRP3 inflammasome activation does not depend upon this interaction. Interacts (via NACHT domain) with DHX33 (via DEAH box); NLRP3 activation in presence of cytosolic dsRNA is mediated by DHX33. Interacts (via NACHT and LRR domains) with ARRB2; this interaction is direct and inducible by polyunsaturated fatty acids (PUFAs). Interacts (via NACHT domain) with DDX3X under both LPS-primed and inflammasome-activating conditions. Interacts with IRF4 (via the LRR domain); this interaction is direct and is required for optimal IRF4 binding to IL4 promoter and efficient IL4 transactivation during differentiation of Th2 helper T-cells. Interacts with MAVS; promoting localization to mitochondria and activation of the NLRP3 inflammasome. Interacts with MARK4; promoting localization of NLRP3 to the microtubule organizing center (MTOC). Interacts with TRIM50; this interaction also promotes NLRP3 oligomerization and subsequent inflammasome activation. Interacts with IRGM; preventing NLRP3 inflammasome assembly and promoting NLRP3 degradation. Interacts (via KFERQ-like motifs) with HSPA8/HSC70; promoting NLRP3 degradation by the chaperone-mediated autophagy pathway. Interacts (via NACHT and LLR domains) with ABHD8; this interaction is enhanced in the presence of NLRP3 inflammasome inducers, such as ATP, nigericin, silica, or alum. Interaction with ABHD8 leads the recruitment of ZDHHC12, hence facilitating NLRP3 palmitoylation and degradation by the chaperone-mediated autophagy pathway (CMA), therefore attenuating NLRP3 inflammasome activation. Post-translationally, phosphorylation at Ser-194 by MAPK8/JNK1 increases inflammasome activation by promoting deubiquitination by BRCC3 and NLRP3 homooligomerization. Phosphorylation at Ser-803 by CSNK1A1 prevents inflammasome activation by preventing NEK7 recruitment. Phosphorylation at Ser-3 in the pyrin domain inhibits homomultimerization of NLRP3 and activation of the NLRP3 inflammasome: dephosphorylation by protein phosphatase 2A (PP2A) promotes assembly of the NLRP3 inflammasome. Phosphorylation at Ser-291 by PKD/PRKD1 promotes NLRP3 inflammasome assembly. Phosphorylation by ERK1/MAPK3 promotes NLRP3 inflammasome assembly. Phosphorylation by BTK (at Tyr-132, Tyr-136, Tyr-145 and Tyr-164) in the region that mediates binding to phosphatidylinositol phosphate, promotes relocalization of NLRP3 and assembly of the NLRP3 inflammasome. Phosphorylation at Tyr-858 inhibits NLRP3 inflammasome assembly: dephosphorylation by PTPN22 promotes inflammasome activation Phosphorylated by LATS1 and LATS2 at Ser-261 following palmitoylation by ZDHHC1, promoting its relocalization to the microtubule organizing center (MTOC), where NLRP3 is activated by NEK7, leading to inflammasome assembly and activation. In terms of processing, ubiquitinated; undergoes both 'Lys-48'- and 'Lys-63'-linked polyubiquitination. Ubiquitination does not lead to degradation, but inhibits inflammasome activation. Deubiquitination is catalyzed by BRCC3 and associated with NLRP3 activation and inflammasome assembly. This process can be induced by the activation of Toll-like receptors (by LPS), through a non-transcriptional pathway dependent on the mitochondrial production of reactive oxygen species, and by ATP. Ubiquitinated by TRIM31 via 'Lys-48'-linked ubiquitination, leading to its degradation by the proteasome. Ubiquitinated at Lys-687 by the SCF(FBXL2) complex, leading to its degradation by the proteasome. Ubiquitinated by TRIM35 via 'lys-48' and 'Lys-63'-linked ubiquitination leading to inhibition of NLRP3 inflammasome activation. Undergoes 'Lys-27'-linked polyubiquitination by MARCHF5, leading to NLRP3-NEK7 complex formation and NLRP3 oligomerization. The disulfide bond in the pyrin domain might play a role in reactive oxygen species-mediated activation. Post-translationally, palmitoylation by ZDHHC12 promotes NLRP3 degradation by the chaperone-mediated autophagy pathway (CMA) and therefore limits NLRP3 inflammasome activation. Interaction with ZDHHC12, and hence NLRP3 palmitoylation, is enhanced by ABHD8. Following palmitoylation, HSPA8/HSC70 recognizes and binds the KFERQ-like motifs on NLRP3 and promotes NLRP3 recruitment to lysosomes, where it is degraded via the chaperone-mediated autophagy pathway in a LAMP2-dependent process. Palmitoylation at Cys-834 and Cys-835 by ZDHHC5 enhances its binding to NEK7 leading to inflammasome assembly and activation. Palmitoylation at Cys-126 and Cys-955 by ZDHHC1 facilitates phosphorylation at Ser-261 by LATS1 and LATS2, promoting its relocalization to the microtubule organizing center (MTOC), where NLRP3 is activated by NEK7, leading to inflammasome assembly and activation. Depalmitoylated by ABHD17A. In terms of processing, degraded via selective autophagy following interaction with Irgm1. Irgm1 promotes NLRP3 recruitment to autophagosome membranes, promoting its SQSTM1/p62-dependent autophagy-dependent degradation. In terms of tissue distribution, expressed with high levels in peripheral blood leukocytes, including Th2 lymphocytes and macrophages. Expressed at low levels in resting osteoblasts (at protein level).

It localises to the cytoplasm. It is found in the cytosol. Its subcellular location is the inflammasome. The protein localises to the cytoskeleton. The protein resides in the microtubule organizing center. It localises to the golgi apparatus membrane. It is found in the endoplasmic reticulum. Its subcellular location is the mitochondrion. The protein localises to the secreted. The protein resides in the nucleus. It catalyses the reaction ATP + H2O = ADP + phosphate + H(+). Its activity is regulated as follows. Under resting conditions, NLRP3 binds ADP and is autoinhibited. Inactive NLRP3 forms homodecameric double-ring cages that hide pyrin domains within NACHT-LRR rings to avoid premature activation. NLRP3 activation stimuli include extracellular ATP, nigericin, reactive oxygen species, crystals of monosodium urate or cholesterol, amyloid-beta fibers, environmental or industrial particles and nanoparticles, such as asbestos, silica, aluminum salts, cytosolic dsRNA, etc. Almost all stimuli trigger intracellular K(+) efflux. These stimuli lead to membrane perturbations that induce activation of NLRP3. Upon activation, NLRP3 is transported to microtubule organizing center (MTOC), where it is unlocked by NEK7, leading to its relocalization to dispersed trans-Golgi network (dTGN) vesicle membranes and recruitment of PYCARD/ASC for the formation of an active inflammasome complex. NEK7-activated NLRP3 forms a disk-shaped inflammasome. NLRP3 and PYCARD/ASC interact via their respective pyrin domains; interaction initiates speck formation (nucleation) which greatly enhances further addition of soluble PYCARD/ASC molecules to the speck in a prion-like polymerization process. Clustered PYCARD/ASC nucleates the formation of CASP1 filaments through the interaction of their respective CARD domains, acting as a platform for CASP1 polymerization and activation. Active CASP1 then processes IL1B and IL18 precursors, leading to the release of mature cytokines in the extracellular milieu and inflammatory response. NLRP3 inflammasome assembly is inhibited by IRGM, which impedes NLRP3 oligomerization. NLRP3 inflammasome is inhibited by cyclic AMP (cAMP), which directly binds NLRP3; inhibition is relieved by calcium-sensing receptor CASR, which inhibits production of cAMP. Specifically inhibited by sulfonylurea MCC950 (also named CP-456,773, CRID3), a potent and specific small-molecule inhibitor of the NLRP3 inflammasome that acts by preventing ATP hydrolysis. Its function is as follows. Sensor component of the NLRP3 inflammasome, which mediates inflammasome activation in response to defects in membrane integrity, leading to secretion of inflammatory cytokines IL1B and IL18 and pyroptosis. In response to pathogens and other damage-associated signals that affect the integrity of membranes, initiates the formation of the inflammasome polymeric complex composed of NLRP3, CASP1 and PYCARD/ASC. Recruitment of pro-caspase-1 (proCASP1) to the NLRP3 inflammasome promotes caspase-1 (CASP1) activation, which subsequently cleaves and activates inflammatory cytokines IL1B and IL18 and gasdermin-D (GSDMD), promoting cytokine secretion and pyroptosis. Activation of NLRP3 inflammasome is also required for HMGB1 secretion; stimulating inflammatory responses. Under resting conditions, ADP-bound NLRP3 is autoinhibited. NLRP3 activation stimuli include extracellular ATP, nigericin, reactive oxygen species, crystals of monosodium urate or cholesterol, amyloid-beta fibers, environmental or industrial particles and nanoparticles, such as asbestos, silica, aluminum salts, cytosolic dsRNA, etc. Almost all stimuli trigger intracellular K(+) efflux. These stimuli lead to membrane perturbation and activation of NLRP3. Upon activation, NLRP3 is transported to microtubule organizing center (MTOC), where it is unlocked by NEK7, leading to its relocalization to dispersed trans-Golgi network (dTGN) vesicle membranes and formation of an active inflammasome complex. Associates with dTGN vesicle membranes by binding to phosphatidylinositol 4-phosphate (PtdIns4P). Shows ATPase activity. In terms of biological role, independently of inflammasome activation, regulates the differentiation of T helper 2 (Th2) cells and has a role in Th2 cell-dependent asthma and tumor growth. During Th2 differentiation, required for optimal IRF4 binding to IL4 promoter and for IRF4-dependent IL4 transcription. Binds to the consensus DNA sequence 5'-GRRGGNRGAG-3'. May also participate in the transcription of IL5, IL13, GATA3, CCR3, CCR4 and MAF. The protein is NACHT, LRR and PYD domains-containing protein 3 of Mus musculus (Mouse).